The chain runs to 160 residues: Large ribosomal subunit protein bL17 (160 aa).

The disordered stretch occupies residues 128–160 (KKATKTRRSRKRKSADVVVEAAPAEETPKAAEE). Residues 129-140 (KATKTRRSRKRK) are compositionally biased toward basic residues.

The protein belongs to the bacterial ribosomal protein bL17 family. In terms of assembly, part of the 50S ribosomal subunit. Contacts protein L32.

The sequence is that of Large ribosomal subunit protein bL17 from Porphyromonas gingivalis (strain ATCC 33277 / DSM 20709 / CIP 103683 / JCM 12257 / NCTC 11834 / 2561).